The chain runs to 121 residues: UPF0102 protein BDI_2565 (121 aa).

This sequence belongs to the UPF0102 family.

In Parabacteroides distasonis (strain ATCC 8503 / DSM 20701 / CIP 104284 / JCM 5825 / NCTC 11152), this protein is UPF0102 protein BDI_2565.